We begin with the raw amino-acid sequence, 466 residues long: cGMP-specific 3',5'-cGMP phosphodiesterase 3 (466 aa).

Over residues 1-120 the composition is skewed to low complexity; that stretch reads MAPQQNIMKQ…NSNNNNSNNN (120 aa). The tract at residues 1-150 is disordered; the sequence is MAPQQNIMKQ…NNNKIRGYND (150 aa). The span at 123–134 shows a compositional bias: acidic residues; it reads DDEEEEGDDEDN. The segment covering 135 to 150 has biased composition (low complexity); the sequence is NNNNNSNNNKIRGYND. Residues 137-458 enclose the PDEase domain; sequence NNNSNNNKIR…EIWSNNGSSS (322 aa). Histidine 213 functions as the Proton donor in the catalytic mechanism. 4 residues coordinate a divalent metal cation: histidine 217, histidine 253, aspartate 254, and aspartate 364.

The protein belongs to the cyclic nucleotide phosphodiesterase family. It depends on a divalent metal cation as a cofactor.

It is found in the cytoplasm. The protein resides in the cytosol. The catalysed reaction is 3',5'-cyclic GMP + H2O = GMP + H(+). Inhibited by 3-isobutyl-1-methylxanthine (IBMX). Functionally, phosphodiesterase specific for cGMP, which is not activated by cGMP. Involved in the degradation of intracellular cGMP. The chain is cGMP-specific 3',5'-cGMP phosphodiesterase 3 (pde3) from Dictyostelium discoideum (Social amoeba).